A 371-amino-acid chain; its full sequence is MAWTKHQLFLAGLMLVTGSINTLSAKWADNFMAEGCGGSKEHSFQHPFLQAVGMFLGEFSCLAAFYLLRCRATGQSDSSVDPQQPFNPLLFLPPALCDMTGTSLMYVALNMTSASSFQMLRGAVIIFTGLFSVAFLGRRLVLSQWLGILATIAGLVVVGLADLLSKHDSQHKLSEVITGDLLIIMAQIIVAIQMVLEEKFVYKHNVHPLRAVGTEGLFGFVILSLLLVPMYYIPAGSFSGNPRGTLEDALDAFCQVGRQPLIAVALLGNISSIAFFNFAGISVTKELSATTRMVLDSLRTVVIWALSLALGWEAFHALQILGFLILLIGTALYNGLHRPLLGRLSRGRPPAEESEQERLLGGSRTPINDAS.

The signal sequence occupies residues 1–25 (MAWTKHQLFLAGLMLVTGSINTLSA). The next 2 membrane-spanning stretches (helical) occupy residues 48-68 (FLQA…FYLL) and 89-109 (LLFL…YVAL). The 57-residue stretch at 104–160 (LMYVALNMTSASSFQMLRGAVIIFTGLFSVAFLGRRLVLSQWLGILATIAGLVVVGL) folds into the EamA domain. N-linked (GlcNAc...) asparagine glycosylation is present at N110. The next 7 helical transmembrane spans lie at 117-137 (FQML…AFLG), 140-160 (LVLS…VVGL), 176-196 (VITG…QMVL), 216-236 (GLFG…IPAG), 261-281 (LIAV…FAGI), 295-312 (LDSL…ALGW), and 317-336 (ALQI…YNGL). The interval 347–371 (GRPPAEESEQERLLGGSRTPINDAS) is disordered. The residue at position 365 (T365) is a Phosphothreonine.

This sequence belongs to the SLC35F solute transporter family. As to quaternary structure, interacts with SLC25A5.

The protein localises to the mitochondrion. It is found in the lysosome membrane. Involved in the maintenance of mitochondrial membrane potential in pancreatic ductal adenocarcinoma (PDAC) cells. Promotes pancreatic ductal adenocarcinoma (PDAC) cell growth. May play a role as a nucleotide-sugar transporter. This is Solute carrier family 35 member F6 (SLC35F6) from Pongo abelii (Sumatran orangutan).